Reading from the N-terminus, the 364-residue chain is Chorismate synthase (364 aa).

Arginine 47 and arginine 53 together coordinate NADP(+). Residues 124 to 126 (RSS), glycine 286, 301 to 305 (KPTAT), and arginine 327 each bind FMN.

The protein belongs to the chorismate synthase family. As to quaternary structure, homotetramer. The cofactor is FMNH2.

It carries out the reaction 5-O-(1-carboxyvinyl)-3-phosphoshikimate = chorismate + phosphate. The protein operates within metabolic intermediate biosynthesis; chorismate biosynthesis; chorismate from D-erythrose 4-phosphate and phosphoenolpyruvate: step 7/7. Its function is as follows. Catalyzes the anti-1,4-elimination of the C-3 phosphate and the C-6 proR hydrogen from 5-enolpyruvylshikimate-3-phosphate (EPSP) to yield chorismate, which is the branch point compound that serves as the starting substrate for the three terminal pathways of aromatic amino acid biosynthesis. This reaction introduces a second double bond into the aromatic ring system. The chain is Chorismate synthase from Acaryochloris marina (strain MBIC 11017).